A 292-amino-acid polypeptide reads, in one-letter code: 4-hydroxy-tetrahydrodipicolinate synthase (292 aa).

Thr45 contacts pyruvate. Residue Tyr133 is the Proton donor/acceptor of the active site. The active-site Schiff-base intermediate with substrate is Lys161. Ile203 serves as a coordination point for pyruvate.

It belongs to the DapA family. Homotetramer; dimer of dimers.

It is found in the cytoplasm. The catalysed reaction is L-aspartate 4-semialdehyde + pyruvate = (2S,4S)-4-hydroxy-2,3,4,5-tetrahydrodipicolinate + H2O + H(+). Its pathway is amino-acid biosynthesis; L-lysine biosynthesis via DAP pathway; (S)-tetrahydrodipicolinate from L-aspartate: step 3/4. Its function is as follows. Catalyzes the condensation of (S)-aspartate-beta-semialdehyde [(S)-ASA] and pyruvate to 4-hydroxy-tetrahydrodipicolinate (HTPA). The protein is 4-hydroxy-tetrahydrodipicolinate synthase of Vibrio vulnificus (strain YJ016).